The sequence spans 223 residues: MADKSDLNALSGRFRGFYPVVIDVETAGFNAKTDALLEVAAVTLKMDQDGWLQPDETLHFHVEPFEGAILEPAALAFNGIDPTNPLRGAVSEYDALHEIFKVVRKGIKDRGCNRAIIVAHNATFDHSFMAAAAERCSLKRNPFHPFATFDTAALSGLVLGQTVLAKACITAGIAFDSSQAHSALYDTNQTALLFCELVNRWKRLGGWPLALEESSLEDTSAED.

One can recognise an Exonuclease domain in the interval 20-194; it reads VVIDVETAGF…YDTNQTALLF (175 aa). 4 residues coordinate Mg(2+): Asp23, Glu25, His181, and Asp186. His181 acts as the Proton donor/acceptor in catalysis.

It belongs to the RNase T family. Homodimer. The cofactor is Mg(2+).

Trims short 3' overhangs of a variety of RNA species, leaving a one or two nucleotide 3' overhang. Responsible for the end-turnover of tRNA: specifically removes the terminal AMP residue from uncharged tRNA (tRNA-C-C-A). Also appears to be involved in tRNA biosynthesis. The polypeptide is Ribonuclease T (Pectobacterium atrosepticum (strain SCRI 1043 / ATCC BAA-672) (Erwinia carotovora subsp. atroseptica)).